The chain runs to 37 residues: MKVQPSVKRICDKCQVIRRHGRVLVICDNQRHKQRQG.

Belongs to the bacterial ribosomal protein bL36 family.

The sequence is that of Large ribosomal subunit protein bL36B from Saccharopolyspora erythraea (strain ATCC 11635 / DSM 40517 / JCM 4748 / NBRC 13426 / NCIMB 8594 / NRRL 2338).